The following is a 202-amino-acid chain: MESMNNQEILNGTIEYVSRSSKLLKKVSDITKEKIKDYPYLDDLTEEYIQAQHLYDRTPKLLKLLSEINITDAIISNEVIENINNMKYELDHLIESTQFRIDDIDTYFKRVETEYFLKDKKNEFYVELSSYNSQIQDSLKKLKSIYDGGKLLTKEVSEINRKKFKNSDKVLTKHINTGIALFIILTSLLVYFIQFKPKISQD.

The chain crosses the membrane as a helical span at residues 175–195 (INTGIALFIILTSLLVYFIQF).

It is found in the membrane. This is an uncharacterized protein from Dictyostelium discoideum (Social amoeba).